We begin with the raw amino-acid sequence, 487 residues long: GTPase Der (487 aa).

Positions 1-20 (MAKAVRKSNSEETVPIKAPR) are disordered. EngA-type G domains are found at residues 28-197 (PVVS…SSKP) and 225-401 (FRLA…SRSR). GTP-binding positions include 34 to 41 (GRQNVGKS), 83 to 87 (DTPGL), 149 to 152 (NKAD), 231 to 238 (GKPNSGKS), 278 to 282 (DTAGI), and 343 to 346 (NKWD). A KH-like domain is found at 402-486 (RKVSTSELNK…PVRLEFRSDR (85 aa)).

It belongs to the TRAFAC class TrmE-Era-EngA-EngB-Septin-like GTPase superfamily. EngA (Der) GTPase family. As to quaternary structure, associates with the 50S ribosomal subunit.

GTPase that plays an essential role in the late steps of ribosome biogenesis. The protein is GTPase Der of Leptospira borgpetersenii serovar Hardjo-bovis (strain L550).